We begin with the raw amino-acid sequence, 523 residues long: Nondiscriminating glutamyl-tRNA synthetase EARS2, mitochondrial (523 aa).

A mitochondrion-targeting transit peptide spans 1 to 41; the sequence is MAALLRRLLQRERPSAASGRPVGRREANLGTDAGVAVRVRF. 40 to 42 serves as a coordination point for L-glutamate; the sequence is RFA. A 'HIGH' region motif is present at residues 45 to 53; that stretch reads PTGFLHLGG. Histidine 50 lines the ATP pocket. L-glutamate contacts are provided by residues glutamate 76, 228–232, and arginine 246; that span reads YHLAC. Glutamate 249 contacts ATP. At lysine 256 the chain carries N6-succinyllysine. ATP is bound at residue 284-288; it reads KLSKR. A 'KMSKS' region motif is present at residues 284 to 288; the sequence is KLSKR. Lysine 486 carries the N6-acetyllysine modification.

The protein belongs to the class-I aminoacyl-tRNA synthetase family. Glutamate--tRNA ligase type 1 subfamily.

It localises to the mitochondrion matrix. The enzyme catalyses tRNA(Glx) + L-glutamate + ATP = L-glutamyl-tRNA(Glx) + AMP + diphosphate. It catalyses the reaction tRNA(Glu) + L-glutamate + ATP = L-glutamyl-tRNA(Glu) + AMP + diphosphate. The catalysed reaction is tRNA(Gln) + L-glutamate + ATP = L-glutamyl-tRNA(Gln) + AMP + diphosphate. In terms of biological role, non-discriminating glutamyl-tRNA synthetase that catalyzes aminoacylation of both mitochondrial tRNA(Glu) and tRNA(Gln) and participates in RNA aminoacylation for mitochondrial protein translation. Attachs glutamate to tRNA(Glu) or tRNA(Gln) in a two-step reaction: glutamate is first activated by ATP to form Glu-AMP and then transferred to the acceptor end of tRNA(Glu) or tRNA(Gln). In vitro, cytoplasmic tRNA(Gln) is slightly glutamylated, but with low activity. This chain is Nondiscriminating glutamyl-tRNA synthetase EARS2, mitochondrial, found in Homo sapiens (Human).